The sequence spans 51 residues: Photosystem I reaction center subunit IX (51 aa).

A helical membrane pass occupies residues 17 to 37 (FFSTAPVIALVFFTLTAGFLV).

The protein belongs to the PsaJ family.

It localises to the cellular thylakoid membrane. Its function is as follows. May help in the organization of the PsaE and PsaF subunits. The protein is Photosystem I reaction center subunit IX of Acaryochloris marina (strain MBIC 11017).